The chain runs to 1017 residues: Rho-GTPase-activating protein LRG1 (1017 aa).

N-acetylmethionine is present on methionine 1. LIM zinc-binding domains lie at 28–88 and 98–148; these read CARC…LCQY and CHVC…CKYH. In terms of domain architecture, LIM zinc-binding 3; truncated spans 155 to 184; it reads KRCKGCEFPISDQYIEFPKGEEIHCWHPEC. In terms of domain architecture, LIM zinc-binding 4 spans 419–474; that stretch reads CAGCNKYIQEECIQFYEHRWHIACFTCSSCHKNINPRSLTDPTFNKEKKKILCSHC. Serine 562 carries the phosphoserine modification. A disordered region spans residues 570 to 602; that stretch reads TDLNDPTKQGDSKNLVIQTDDPSSSQQVSTREN. Polar residues predominate over residues 584-602; that stretch reads LVIQTDDPSSSQQVSTREN. The Rho-GAP domain maps to 730-953; the sequence is APLDVLCEKW…YLITHNEEMA (224 aa).

As to quaternary structure, interacts with CDC42, RHO1 and RHO2.

The protein resides in the cytoplasm. It is found in the bud. The protein localises to the bud neck. Its function is as follows. Acts in signal transduction. Activates CDC42, RHO1 and RHO2. Negatively regulates 1,3-beta-glucan synthesis. May be responsible for the down-regulation of CDC42 during mating. The chain is Rho-GTPase-activating protein LRG1 (LRG1) from Saccharomyces cerevisiae (strain ATCC 204508 / S288c) (Baker's yeast).